Here is a 157-residue protein sequence, read N- to C-terminus: Acetyltransferase PseH (157 aa).

The region spanning 5–152 (KNFTELNSQE…YHICLKQSDC (148 aa)) is the N-acetyltransferase domain.

Its function is as follows. Catalyzes the third step in the biosynthesis of pseudaminic acid, a sialic-acid-like sugar that is used to modify flagellin. Mediates N-4 acetylation of UDP-4-amino-4,6-dideoxy-beta-L-AltNAc to form UDP-2,4-diacetamido-2,4,6-trideoxy-beta-L-altropyranose. This chain is Acetyltransferase PseH (pseH), found in Campylobacter jejuni subsp. jejuni serotype O:23/36 (strain 81-176).